Here is a 229-residue protein sequence, read N- to C-terminus: Enolase-phosphatase E1 (229 aa).

Belongs to the HAD-like hydrolase superfamily. MasA/MtnC family. Monomer. It depends on Mg(2+) as a cofactor.

The enzyme catalyses 5-methylsulfanyl-2,3-dioxopentyl phosphate + H2O = 1,2-dihydroxy-5-(methylsulfanyl)pent-1-en-3-one + phosphate. Its pathway is amino-acid biosynthesis; L-methionine biosynthesis via salvage pathway; L-methionine from S-methyl-5-thio-alpha-D-ribose 1-phosphate: step 3/6. It functions in the pathway amino-acid biosynthesis; L-methionine biosynthesis via salvage pathway; L-methionine from S-methyl-5-thio-alpha-D-ribose 1-phosphate: step 4/6. Functionally, bifunctional enzyme that catalyzes the enolization of 2,3-diketo-5-methylthiopentyl-1-phosphate (DK-MTP-1-P) into the intermediate 2-hydroxy-3-keto-5-methylthiopentenyl-1-phosphate (HK-MTPenyl-1-P), which is then dephosphorylated to form the acireductone 1,2-dihydroxy-3-keto-5-methylthiopentene (DHK-MTPene). The protein is Enolase-phosphatase E1 of Citrobacter koseri (strain ATCC BAA-895 / CDC 4225-83 / SGSC4696).